A 402-amino-acid polypeptide reads, in one-letter code: MIKDIFFDQVKPAYGCTEPIAVALSTATAKKYLNETLEDLKEINITLDKNTYKNGLVVNIPGTNIFGLEIAAALGYLCGIPEKGLEVLKDVNSQCLSKATNLKNKIKIEINDMPYLYVETIAVSKDNHTVKILIEGKHDNIAKITIDSNTILDKPFNPSKTTLENIKKYSIDEIIDYVENPDKEVLDYVEKAIEMNIDIAKYGMQMKGNFSNAAINEYVKYVSAGVDARMSGVLKPVMTVAGSGNQGLSCILPIATKREEYDKEKILKATLLSILVTIYIKAYTGLLTPICGAGSISAAGSAAGLTYLKGGNRQQIKNAINDTIGTLFGLTCDGAKRGCALKAVTGTLTAIQVSELAINNIDVPCGNGIVAKDVEETIRRVGKLTNSVKQFDKDVLDYIGKC.

It belongs to the UPF0597 family.

In Thermosipho africanus (strain TCF52B), this protein is UPF0597 protein THA_1286.